The chain runs to 563 residues: Secreted lipase ARB07186/07185 (563 aa).

The signal sequence occupies residues 1–20; it reads MAKYDFVMLWILTLTAAIAA. C83 and C101 are oxidised to a cystine. The Acyl-ester intermediate role is filled by S215. C268 and C281 are joined by a disulfide.

This sequence belongs to the type-B carboxylesterase/lipase family.

The protein localises to the secreted. The catalysed reaction is a triacylglycerol + H2O = a diacylglycerol + a fatty acid + H(+). The polypeptide is Secreted lipase ARB07186/07185 (Arthroderma benhamiae (strain ATCC MYA-4681 / CBS 112371) (Trichophyton mentagrophytes)).